Here is a 132-residue protein sequence, read N- to C-terminus: Small ribosomal subunit protein uS9 (132 aa).

The protein belongs to the universal ribosomal protein uS9 family.

In Blochmanniella pennsylvanica (strain BPEN), this protein is Small ribosomal subunit protein uS9.